Consider the following 520-residue polypeptide: MSESGHSQPGLYGIERRRRWKEPGSSGPQNLSGPGGRERDYIAPWERERRDGSEDPSTNVMQKTPIILSKPPAERSKQPPPSTAPAAPPAPAPLEKPIVLMKPREEGKGPVAATGASTPEGTAPPPPTAPAPPKGEKEGQRPTQPVYQIQNRGMGTAAPTAMDPVVGQAKLLPPERMKHSIKLVDDQMNWCDSAIEYLLDQTDVLVVGVLGLQGTGKSMVMSLLSANTPEEDQRAYVFRAQSAEMKERGGNQTSGIDFFITQERIVFLDTQPILSPSILDHLINNDRKLPPEYNLPHTYVEMQSLQIAAFLFTVCHVVIVVQDWFTDLSLYRFLQTAEMVKPSTPSPSHESSSAAGSDEGTEYYPHLVFLQNKARREDFCPRKLRQMHLMIDQLMAHSHLRYKGTLSMLQCNIFPGLPPDFLDAEVNLFLVPFMDSEAENENPPRAGPGSSPLFSLLPGYRGHPSFQSLVSKLRSQVMSMARPQLSHTILTEKNWFHYAARIWDGVKKSSALAEYSRLLA.

Disordered regions lie at residues 1–94 (MSES…PAPL) and 107–143 (GKGP…QRPT). S2 carries the N-acetylserine modification. Phosphoserine is present on residues S2, S4, S7, S32, and S53. The segment covering 36–53 (GRERDYIAPWERERRDGS) has biased composition (basic and acidic residues). The segment covering 78 to 94 (QPPPSTAPAAPPAPAPL) has biased composition (pro residues). Residues 112–121 (AATGASTPEG) are compositionally biased toward low complexity. Pro residues predominate over residues 122 to 133 (TAPPPPTAPAPP). S451 is subject to Phosphoserine.

It belongs to the SMG9 family. Self-associates to form homodimers and forms heterodimers with SMG8; these assembly forms may represent SMG1C intermediate forms. Component of the SMG1C complex composed of SMG1, SMG8 and SMG9. Interacts with DHX34; the interaction is RNA-independent. Phosphorylated by SMG1.

Functionally, involved in nonsense-mediated decay (NMD) of mRNAs containing premature stop codons. Is recruited by release factors to stalled ribosomes together with SMG1 and SMG8 (forming the SMG1C protein kinase complex) and, in the SMG1C complex, is required for the efficient association between SMG1 and SMG8. Plays a role in brain, heart, and eye development. The chain is Nonsense-mediated mRNA decay factor SMG9 from Rattus norvegicus (Rat).